Reading from the N-terminus, the 352-residue chain is UDP-N-acetylglucosamine--N-acetylmuramyl-(pentapeptide) pyrophosphoryl-undecaprenol N-acetylglucosamine transferase (352 aa).

Residues 11–13 (TGG), asparagine 120, arginine 161, serine 188, and glutamine 286 each bind UDP-N-acetyl-alpha-D-glucosamine.

This sequence belongs to the glycosyltransferase 28 family. MurG subfamily.

Its subcellular location is the cell inner membrane. It catalyses the reaction di-trans,octa-cis-undecaprenyl diphospho-N-acetyl-alpha-D-muramoyl-L-alanyl-D-glutamyl-meso-2,6-diaminopimeloyl-D-alanyl-D-alanine + UDP-N-acetyl-alpha-D-glucosamine = di-trans,octa-cis-undecaprenyl diphospho-[N-acetyl-alpha-D-glucosaminyl-(1-&gt;4)]-N-acetyl-alpha-D-muramoyl-L-alanyl-D-glutamyl-meso-2,6-diaminopimeloyl-D-alanyl-D-alanine + UDP + H(+). It functions in the pathway cell wall biogenesis; peptidoglycan biosynthesis. Its function is as follows. Cell wall formation. Catalyzes the transfer of a GlcNAc subunit on undecaprenyl-pyrophosphoryl-MurNAc-pentapeptide (lipid intermediate I) to form undecaprenyl-pyrophosphoryl-MurNAc-(pentapeptide)GlcNAc (lipid intermediate II). The sequence is that of UDP-N-acetylglucosamine--N-acetylmuramyl-(pentapeptide) pyrophosphoryl-undecaprenol N-acetylglucosamine transferase from Prochlorococcus marinus (strain NATL1A).